A 199-amino-acid polypeptide reads, in one-letter code: Putative 3-methyladenine DNA glycosylase (199 aa).

Belongs to the DNA glycosylase MPG family.

The chain is Putative 3-methyladenine DNA glycosylase from Chlorobium phaeobacteroides (strain BS1).